The chain runs to 834 residues: Glycerol-3-phosphate acyltransferase (834 aa).

The HXXXXD motif signature appears at 309–314 (CHRSHI).

This sequence belongs to the GPAT/DAPAT family.

The protein localises to the cell inner membrane. It carries out the reaction sn-glycerol 3-phosphate + an acyl-CoA = a 1-acyl-sn-glycero-3-phosphate + CoA. The protein operates within phospholipid metabolism; CDP-diacylglycerol biosynthesis; CDP-diacylglycerol from sn-glycerol 3-phosphate: step 1/3. This chain is Glycerol-3-phosphate acyltransferase, found in Pseudomonas fluorescens (strain ATCC BAA-477 / NRRL B-23932 / Pf-5).